The following is a 238-amino-acid chain: Ribosomal RNA small subunit methyltransferase G (238 aa).

S-adenosyl-L-methionine is bound by residues glycine 77, phenylalanine 82, alanine 128–glutamate 129, and arginine 147. The segment at arginine 216–serine 238 is disordered.

Belongs to the methyltransferase superfamily. RNA methyltransferase RsmG family.

It localises to the cytoplasm. Functionally, specifically methylates the N7 position of guanine in position 535 of 16S rRNA. In Halalkalibacterium halodurans (strain ATCC BAA-125 / DSM 18197 / FERM 7344 / JCM 9153 / C-125) (Bacillus halodurans), this protein is Ribosomal RNA small subunit methyltransferase G.